We begin with the raw amino-acid sequence, 124 residues long: Small ribosomal subunit protein uS12 (124 aa).

A 3-methylthioaspartic acid modification is found at D89.

Belongs to the universal ribosomal protein uS12 family. As to quaternary structure, part of the 30S ribosomal subunit. Contacts proteins S8 and S17. May interact with IF1 in the 30S initiation complex.

With S4 and S5 plays an important role in translational accuracy. In terms of biological role, interacts with and stabilizes bases of the 16S rRNA that are involved in tRNA selection in the A site and with the mRNA backbone. Located at the interface of the 30S and 50S subunits, it traverses the body of the 30S subunit contacting proteins on the other side and probably holding the rRNA structure together. The combined cluster of proteins S8, S12 and S17 appears to hold together the shoulder and platform of the 30S subunit. In Hydrogenovibrio crunogenus (strain DSM 25203 / XCL-2) (Thiomicrospira crunogena), this protein is Small ribosomal subunit protein uS12.